A 483-amino-acid polypeptide reads, in one-letter code: MNYGLTHTPSLTMSECLVLGVFSDLALPDFATAIDNEQKGLIKKLCQRVPEPGNTVWQTDVEGHSLLIIQCGKKEEFSANSLQKRVGEITEALIKQRFSSATVCLPRLNQESAEWQLEQMIVQIDNLRYQLLDFKTKHAKSHKLESVIFHLPGATEKSLEMAKAIVTGVEFCRDLANMPANICTPTYLGEQAISLSKQFDQISCQVMGPEEIKEMGMGALLAVAQGSDQPPRLIDIHYHGNKNSTPVILVGKGITFDSGGLSIKPANAMDEMKYDMSGAASVLGVIKACALLKLPINLIGIIASAENLISGSAVKSGDIVTTMSGQTVEIINTDAEGRLVLADALTYAERYNPDFVIDIATLTGAIIVALGNIATGYMTRDEQLAKSIERAANESQDKVWRMPLDEAYQDALESPLADMINAGFDRSAGSITAACFLSRFTEKYRWAHLDIAGTAWISGKKRNATGRPVPLLIQLLRHVANSR.

The Mn(2+) site is built by Lys252 and Asp257. Lys264 is an active-site residue. Mn(2+) is bound by residues Asp275, Asp334, and Glu336. Arg338 is an active-site residue.

This sequence belongs to the peptidase M17 family. Mn(2+) is required as a cofactor.

It localises to the cytoplasm. The catalysed reaction is Release of an N-terminal amino acid, Xaa-|-Yaa-, in which Xaa is preferably Leu, but may be other amino acids including Pro although not Arg or Lys, and Yaa may be Pro. Amino acid amides and methyl esters are also readily hydrolyzed, but rates on arylamides are exceedingly low.. The enzyme catalyses Release of an N-terminal amino acid, preferentially leucine, but not glutamic or aspartic acids.. Functionally, presumably involved in the processing and regular turnover of intracellular proteins. Catalyzes the removal of unsubstituted N-terminal amino acids from various peptides. The chain is Probable cytosol aminopeptidase from Legionella pneumophila (strain Corby).